A 500-amino-acid polypeptide reads, in one-letter code: Pyridine nucleotide-disulfide oxidoreductase domain-containing protein 1 (500 aa).

N-acetylmethionine is present on methionine 1.

Belongs to the class-I pyridine nucleotide-disulfide oxidoreductase family. PYROXD1 subfamily. It depends on FAD as a cofactor.

The protein resides in the nucleus. It is found in the cytoplasm. Its subcellular location is the myofibril. It localises to the sarcomere. Functionally, probable FAD-dependent oxidoreductase; involved in the cellular oxidative stress response. Required for normal sarcomere structure and muscle fiber integrity. This is Pyridine nucleotide-disulfide oxidoreductase domain-containing protein 1 (PYROXD1) from Pongo abelii (Sumatran orangutan).